A 152-amino-acid chain; its full sequence is Type-1 angiotensin II receptor-associated protein (152 aa).

At 1 to 23 (MELPAVNLKVILLGHWLLTTWGC) the chain is on the extracellular side. Residues 24–44 (IVFSGSYAWANFTILALGVWA) form a helical membrane-spanning segment. Topologically, residues 45 to 55 (VAQRDSIDAIS) are cytoplasmic. The chain crosses the membrane as a helical span at residues 56–76 (MFLGGLLATIFLDIVHISIFY). The Extracellular portion of the chain corresponds to 77–86 (PRAGLTDTGR). Residues 87–107 (FGAGMAILSLLLKPLSCCFVY) form a helical membrane-spanning segment. At 108-152 (HMYRQRGGFLGSSQDRSAYQTIDSAEAPANAFAVPEGRGQDARGY) the chain is on the cytoplasmic side. Phosphoserine is present on residues Ser119 and Ser120. Thr128 carries the post-translational modification Phosphothreonine. Ser131 carries the post-translational modification Phosphoserine.

As to quaternary structure, interacts with RACK1, and with the carboxy-terminal region of AGTR1.

It localises to the endoplasmic reticulum membrane. The protein resides in the golgi apparatus membrane. The protein localises to the cytoplasmic vesicle membrane. Its function is as follows. Appears to be a negative regulator of type-1 angiotensin II receptor-mediated signaling by regulating receptor internalization as well as mechanism of receptor desensitization such as phosphorylation. Also induces a decrease in cell proliferation and angiotensin II-stimulated transcriptional activity. The chain is Type-1 angiotensin II receptor-associated protein (AGTRAP) from Pongo abelii (Sumatran orangutan).